Consider the following 137-residue polypeptide: Large ribosomal subunit protein uL16 (137 aa).

The protein belongs to the universal ribosomal protein uL16 family. In terms of assembly, part of the 50S ribosomal subunit.

Binds 23S rRNA and is also seen to make contacts with the A and possibly P site tRNAs. In Rhodopseudomonas palustris (strain ATCC BAA-98 / CGA009), this protein is Large ribosomal subunit protein uL16.